A 669-amino-acid polypeptide reads, in one-letter code: Coagulation factor XIII B chain (669 aa).

Positions 1 to 21 (MMTLRHLPFILLLILSGELYA) are cleaved as a signal peptide. Sushi domains follow at residues 25 to 89 (QCDF…PRCY), 90 to 149 (KKCL…SCRK), 152 to 211 (ETCL…QCNK), 212 to 270 (LMCS…ICEG), 273 to 330 (NRCP…KCIE), 335 to 392 (VACE…ECVE), 395 to 453 (ENCK…VCLE), 454 to 517 (PCTI…PMCI), 523 to 581 (GMCA…SCLE), and 582 to 648 (PCTL…PKCT). 20 disulfide bridges follow: Cys26–Cys77, Cys60–Cys88, Cys92–Cys136, Cys119–Cys147, Cys154–Cys198, Cys181–Cys209, Cys214–Cys256, Cys242–Cys268, Cys275–Cys317, Cys303–Cys328, Cys337–Cys379, Cys365–Cys390, Cys397–Cys440, Cys426–Cys451, Cys455–Cys506, Cys487–Cys516, Cys525–Cys568, Cys554–Cys579, Cys583–Cys637, and Cys617–Cys647. A glycan (N-linked (GlcNAc...) asparagine) is linked at Asn163. An N-linked (GlcNAc...) asparagine glycan is attached at Asn546.

As to quaternary structure, tetramer of two A chains (F13A1) and two B (F13B) chains. Predominantly expressed in liver and kidney.

The protein localises to the secreted. In terms of biological role, the B chain of factor XIII is not catalytically active, but is thought to stabilize the A subunits and regulate the rate of transglutaminase formation by thrombin. The protein is Coagulation factor XIII B chain (F13b) of Mus musculus (Mouse).